Reading from the N-terminus, the 313-residue chain is Ribosomal RNA small subunit methyltransferase H (313 aa).

S-adenosyl-L-methionine-binding positions include 31 to 33, Asp51, Phe77, Asp95, and Gln102; that span reads GGH.

Belongs to the methyltransferase superfamily. RsmH family.

Its subcellular location is the cytoplasm. The catalysed reaction is cytidine(1402) in 16S rRNA + S-adenosyl-L-methionine = N(4)-methylcytidine(1402) in 16S rRNA + S-adenosyl-L-homocysteine + H(+). Its function is as follows. Specifically methylates the N4 position of cytidine in position 1402 (C1402) of 16S rRNA. This Xylella fastidiosa (strain 9a5c) protein is Ribosomal RNA small subunit methyltransferase H.